The primary structure comprises 88 residues: Phosphocarrier protein HPr (88 aa).

In terms of domain architecture, HPr spans 1–88; the sequence is MAQKTFTVTA…DTMSKEGLGE (88 aa). A Phosphoserine modification is found at S12. H15 serves as the catalytic Pros-phosphohistidine intermediate. S46 bears the Phosphoserine; by HPrK/P mark.

This sequence belongs to the HPr family.

It localises to the cytoplasm. Phosphorylation on Ser-46 inhibits the phosphoryl transfer from enzyme I to HPr. Functionally, general (non sugar-specific) component of the phosphoenolpyruvate-dependent sugar phosphotransferase system (sugar PTS). This major carbohydrate active-transport system catalyzes the phosphorylation of incoming sugar substrates concomitantly with their translocation across the cell membrane. The phosphoryl group from phosphoenolpyruvate (PEP) is transferred to the phosphoryl carrier protein HPr by enzyme I. Phospho-HPr then transfers it to the PTS EIIA domain. In terms of biological role, P-Ser-HPr interacts with the catabolite control protein A (CcpA), forming a complex that binds to DNA at the catabolite response elements cre, operator sites preceding a large number of catabolite-regulated genes. Thus, P-Ser-HPr is a corepressor in carbon catabolite repression (CCR), a mechanism that allows bacteria to coordinate and optimize the utilization of available carbon sources. P-Ser-HPr also plays a role in inducer exclusion, in which it probably interacts with several non-PTS permeases and inhibits their transport activity. This chain is Phosphocarrier protein HPr (ptsH), found in Priestia megaterium (Bacillus megaterium).